The sequence spans 109 residues: Nucleoid-associated protein VV1_2004 (109 aa).

Belongs to the YbaB/EbfC family. As to quaternary structure, homodimer.

It is found in the cytoplasm. The protein resides in the nucleoid. Functionally, binds to DNA and alters its conformation. May be involved in regulation of gene expression, nucleoid organization and DNA protection. The sequence is that of Nucleoid-associated protein VV1_2004 from Vibrio vulnificus (strain CMCP6).